Here is a 160-residue protein sequence, read N- to C-terminus: SsrA-binding protein (160 aa).

The disordered stretch occupies residues 131 to 160 (KKEYDKRHTERERDSDRELQRAVRSKGKDD).

It belongs to the SmpB family.

The protein localises to the cytoplasm. Required for rescue of stalled ribosomes mediated by trans-translation. Binds to transfer-messenger RNA (tmRNA), required for stable association of tmRNA with ribosomes. tmRNA and SmpB together mimic tRNA shape, replacing the anticodon stem-loop with SmpB. tmRNA is encoded by the ssrA gene; the 2 termini fold to resemble tRNA(Ala) and it encodes a 'tag peptide', a short internal open reading frame. During trans-translation Ala-aminoacylated tmRNA acts like a tRNA, entering the A-site of stalled ribosomes, displacing the stalled mRNA. The ribosome then switches to translate the ORF on the tmRNA; the nascent peptide is terminated with the 'tag peptide' encoded by the tmRNA and targeted for degradation. The ribosome is freed to recommence translation, which seems to be the essential function of trans-translation. The chain is SsrA-binding protein from Pseudomonas syringae pv. syringae (strain B728a).